Consider the following 225-residue polypeptide: NAD(P)H-quinone oxidoreductase subunit K, chloroplastic (225 aa).

Cys-43, Cys-44, Cys-108, and Cys-139 together coordinate [4Fe-4S] cluster.

The protein belongs to the complex I 20 kDa subunit family. As to quaternary structure, NDH is composed of at least 16 different subunits, 5 of which are encoded in the nucleus. It depends on [4Fe-4S] cluster as a cofactor.

The protein localises to the plastid. It localises to the chloroplast thylakoid membrane. The enzyme catalyses a plastoquinone + NADH + (n+1) H(+)(in) = a plastoquinol + NAD(+) + n H(+)(out). It catalyses the reaction a plastoquinone + NADPH + (n+1) H(+)(in) = a plastoquinol + NADP(+) + n H(+)(out). Its function is as follows. NDH shuttles electrons from NAD(P)H:plastoquinone, via FMN and iron-sulfur (Fe-S) centers, to quinones in the photosynthetic chain and possibly in a chloroplast respiratory chain. The immediate electron acceptor for the enzyme in this species is believed to be plastoquinone. Couples the redox reaction to proton translocation, and thus conserves the redox energy in a proton gradient. This Atropa belladonna (Belladonna) protein is NAD(P)H-quinone oxidoreductase subunit K, chloroplastic.